The chain runs to 426 residues: Serine--tRNA ligase (426 aa).

L-serine is bound at residue 233–235 (TAE). An ATP-binding site is contributed by 264–266 (RRE). L-serine is bound at residue E287. 351-354 (EISS) contributes to the ATP binding site. S386 lines the L-serine pocket.

It belongs to the class-II aminoacyl-tRNA synthetase family. Type-1 seryl-tRNA synthetase subfamily. Homodimer. The tRNA molecule binds across the dimer.

The protein resides in the cytoplasm. The catalysed reaction is tRNA(Ser) + L-serine + ATP = L-seryl-tRNA(Ser) + AMP + diphosphate + H(+). The enzyme catalyses tRNA(Sec) + L-serine + ATP = L-seryl-tRNA(Sec) + AMP + diphosphate + H(+). It functions in the pathway aminoacyl-tRNA biosynthesis; selenocysteinyl-tRNA(Sec) biosynthesis; L-seryl-tRNA(Sec) from L-serine and tRNA(Sec): step 1/1. In terms of biological role, catalyzes the attachment of serine to tRNA(Ser). Is also able to aminoacylate tRNA(Sec) with serine, to form the misacylated tRNA L-seryl-tRNA(Sec), which will be further converted into selenocysteinyl-tRNA(Sec). In Prochlorococcus marinus (strain NATL1A), this protein is Serine--tRNA ligase.